The sequence spans 539 residues: Phosphoenolpyruvate carboxykinase (ATP) (539 aa).

R64, Y206, and K212 together coordinate substrate. ATP contacts are provided by residues K212, H231, and G247 to T255. Positions 212 and 231 each coordinate Mn(2+). D268 lines the Mn(2+) pocket. ATP is bound by residues E296, R332, R448 to I449, and T454. R332 is a binding site for substrate.

It belongs to the phosphoenolpyruvate carboxykinase (ATP) family. In terms of assembly, monomer. Mn(2+) is required as a cofactor.

The protein resides in the cytoplasm. The catalysed reaction is oxaloacetate + ATP = phosphoenolpyruvate + ADP + CO2. It functions in the pathway carbohydrate biosynthesis; gluconeogenesis. In terms of biological role, involved in the gluconeogenesis. Catalyzes the conversion of oxaloacetate (OAA) to phosphoenolpyruvate (PEP) through direct phosphoryl transfer between the nucleoside triphosphate and OAA. The chain is Phosphoenolpyruvate carboxykinase (ATP) from Sodalis glossinidius (strain morsitans).